A 361-amino-acid chain; its full sequence is uncharacterized protein (361 aa).

33-40 (GPINSGKT) is an ATP binding site.

It belongs to the archaeal ATPase family.

This is an uncharacterized protein from Methanocaldococcus jannaschii (strain ATCC 43067 / DSM 2661 / JAL-1 / JCM 10045 / NBRC 100440) (Methanococcus jannaschii).